The following is a 400-amino-acid chain: Axin-like protein 1 (400 aa).

The RGS domain occupies 4–132 (RSKFSIDRVL…TTTADVNTTW (129 aa)). Disordered stretches follow at residues 190–233 (QETK…TLKV) and 278–306 (GTLE…GSEA). Positions 194-210 (NSSETEEHAESPRKEKS) are enriched in basic and acidic residues. Polar residues predominate over residues 287–298 (FTGTNNGFSTLQ). The 88-residue stretch at 305–392 (EAPKMTVELR…RITAICRMCP (88 aa)) folds into the DIX domain.

As to quaternary structure, interacts with bar-1, dsh-2, gsk-3, and mig-5.

Functionally, works in parallel with pry-1 in negatively regulating bar-1 signaling in vulval precursor cells and Q neuroblasts. Shown to have a role in excretory cell development. The protein is Axin-like protein 1 of Caenorhabditis elegans.